We begin with the raw amino-acid sequence, 389 residues long: Alpha-(1,3)-fucosyltransferase 7 (389 aa).

Over 1-55 the chain is Cytoplasmic; it reads MPTPCPPACLSTPGTHRLLPFPDWKAPSWESRKEATCNSSSPGPWAEPTVQGYHP. Residues 56-78 form a helical; Signal-anchor for type II membrane protein membrane-spanning segment; it reads TRRLRAWGGLAGGATFMVIWFFW. At 79–389 the chain is on the lumenal side; the sequence is LWGSAPGSAP…YEDLESWFQA (311 aa). C115 and C123 are joined by a disulfide. N128 carries an N-linked (GlcNAc...) asparagine glycan. The cysteines at positions 258 and 261 are disulfide-linked. N-linked (GlcNAc...) asparagine glycosylation is present at N338. Residues C365 and C368 are joined by a disulfide bond.

Belongs to the glycosyltransferase 10 family. Post-translationally, N-glycosylated. Highly expressed in lung and bone marrow and to a much lesser extent in spleen, salivary gland and skeletal muscle.

It is found in the golgi apparatus. The protein resides in the golgi stack membrane. The enzyme catalyses an N-acetyl-alpha-neuraminyl-(2-&gt;3)-beta-D-galactosyl-(1-&gt;4)-N-acetyl-beta-D-glucosaminyl derivative + GDP-beta-L-fucose = an alpha-Neu5Ac-(2-&gt;3)-beta-D-Gal-(1-&gt;4)-[alpha-L-Fuc-(1-&gt;3)]-beta-D-GlcNAc derivative + GDP + H(+). It carries out the reaction an alpha-Neu5Ac-(2-&gt;3)-beta-D-Gal-(1-&gt;4)-beta-D-GlcNAc6S derivative + GDP-beta-L-fucose = an alpha-Neu5Ac-(2-&gt;3)-beta-D-Gal-(1-&gt;4)-[alpha-L-Fuc-(1-&gt;3)]-beta-D-GlcNAc6S derivative + GDP + H(+). It catalyses the reaction a neolactoside IV(3)-alpha-NeuAc-nLc4Cer + GDP-beta-L-fucose = a neolactoside IV(3)-alpha-NeuNAc,III(3)-alpha-Fuc-nLc4Cer + GDP + H(+). The catalysed reaction is a neolactoside VI(3)-alpha-NeuNAc-nLc6Cer + GDP-beta-L-fucose = a neolactoside VI(3)-alpha-NeuAc,V(3)-alphaFuc-nLc6Cer + GDP + H(+). The enzyme catalyses an alpha-Neu5Ac-(2-&gt;3)-beta-D-Gal-(1-&gt;4)-beta-D-GlcNAc-(1-&gt;3)-beta-D-Gal-(1-&gt;4)-[alpha-L-Fuc-(1-&gt;3)]-beta-D-GlcNAc derivative + GDP-beta-L-fucose = an alpha-Neu5Ac-(2-&gt;3)-beta-D-Gal-(1-&gt;4)-[alpha-L-Fuc-(1-&gt;3)]-beta-D-GlcNAc-(1-&gt;3)-beta-D-Gal-(1-&gt;4)-[alpha-L-Fuc-(1-&gt;3)]-beta-D-GlcNAc derivative + GDP + H(+). It carries out the reaction alpha-Neu5Ac-(2-&gt;3)-beta-D-Gal-(1-&gt;4)-beta-D-GlcNAc-(1-&gt;3)-beta-D-Gal-(1-&gt;4)-D-Glc + GDP-beta-L-fucose = alpha-Neu5Ac-(2-&gt;3)-beta-D-Gal-(1-&gt;4)-[alpha-L-Fuc-(1-&gt;3)]-beta-D-GlcNAc-(1-&gt;3)-beta-D-Gal-(1-&gt;4)-D-Glc + GDP + H(+). It catalyses the reaction alpha-Neu5Ac-(2-&gt;3)-beta-D-Gal-(1-&gt;4)-beta-D-GlcNAc-(1-&gt;3)-beta-D-Gal-(1-&gt;4)-[alpha-L-Fuc-(1-&gt;3)]-beta-D-GlcNAc-(1-&gt;3)-beta-D-Gal-(1-&gt;4)-beta-D-GlcNAc + GDP-beta-L-fucose = alpha-Neu5Ac-(2-&gt;3)-beta-D-Gal-(1-&gt;4)-[alpha-L-Fuc-(1-&gt;3)]-beta-D-GlcNAc-(1-&gt;3)-beta-D-Gal-(1-&gt;4)-[alpha-L-Fuc-(1-&gt;3)]-beta-D-GlcNAc-(1-&gt;3)-beta-D-Gal-(1-&gt;4)-beta-D-GlcNAc + GDP + H(+). The catalysed reaction is alpha-Neu5Ac-(2-&gt;3)-beta-D-Gal-(1-&gt;4)-beta-D-GlcNAc-(1-&gt;3)-beta-D-Gal-(1-&gt;4)-beta-D-GlcNAc-(1-&gt;3)-beta-D-Gal-(1-&gt;4)-beta-D-GlcNAc + GDP-beta-L-fucose = alpha-Neu5Ac-(2-&gt;3)-beta-D-Gal-(1-&gt;4)-[alpha-L-Fuc-(1-&gt;3)]-beta-D-GlcNAc-(1-&gt;3)-beta-D-Gal-(1-&gt;4)-beta-D-GlcNAc-(1-&gt;3)-beta-D-Gal-(1-&gt;4)-beta-D-GlcNAc + GDP + H(+). It functions in the pathway protein modification; protein glycosylation. Inhibited by NaCl. Inhibited by GDP in a concentration dependent manner, with an IC(50) value of 93 uM. Also inhibited by GMP and GTP. Inhibited by N-ethylmaleimide. Activated by poly(ethylene glycol) by enhancing the thermal stability of FUT7. Activated by Mn2+, Ca2+, and Mg2+. Both panosialin A and B inhibit activity with IC(50) values of 4.8 and 5.3 ug/ml, respectively. Inhibited by gallic acid (GA) and (-)-epigallocatechin gallate (EGCG) in a time-dependent and irreversible manner with IC(50) values of 60 and 700 nM, respectively. Catalyzes the transfer of L-fucose, from a guanosine diphosphate-beta-L-fucose, to the N-acetyl glucosamine (GlcNAc) of a distal alpha2,3 sialylated lactosamine unit of a glycoprotein or a glycolipid-linked sialopolylactosamines chain through an alpha-1,3 glycosidic linkage and participates in the final fucosylation step in the biosynthesis of the sialyl Lewis X (sLe(x)), a carbohydrate involved in cell and matrix adhesion during leukocyte trafficking and fertilization. In vitro, also synthesizes sialyl-dimeric-Lex structures, from VIM-2 structures and both di-fucosylated and trifucosylated structures from mono-fucosylated precursors. However does not catalyze alpha 1-3 fucosylation when an internal alpha 1-3 fucosylation is present in polylactosamine chain and the fucosylation rate of the internal GlcNAc residues is reduced once fucose has been added to the distal GlcNAc. Also catalyzes the transfer of a fucose from GDP-beta-fucose to the 6-sulfated a(2,3)sialylated substrate to produce 6-sulfo sLex mediating significant L-selectin-dependent cell adhesion. Through sialyl-Lewis(x) biosynthesis, can control SELE- and SELP-mediated cell adhesion with leukocytes and allows leukocytes tethering and rolling along the endothelial tissue thereby enabling the leukocytes to accumulate at a site of inflammation. May enhance embryo implantation through sialyl Lewis X (sLeX)-mediated adhesion of embryo cells to endometrium. May affect insulin signaling by up-regulating the phosphorylation and expression of some signaling molecules involved in the insulin-signaling pathway through SLe(x) which is present on the glycans of the INSRR alpha subunit. This is Alpha-(1,3)-fucosyltransferase 7 from Mus musculus (Mouse).